The primary structure comprises 395 residues: NAD(P)H-quinone oxidoreductase subunit H, chloroplastic (395 aa).

It belongs to the complex I 49 kDa subunit family. As to quaternary structure, NDH is composed of at least 16 different subunits, 5 of which are encoded in the nucleus.

Its subcellular location is the plastid. It localises to the chloroplast thylakoid membrane. The enzyme catalyses a plastoquinone + NADH + (n+1) H(+)(in) = a plastoquinol + NAD(+) + n H(+)(out). The catalysed reaction is a plastoquinone + NADPH + (n+1) H(+)(in) = a plastoquinol + NADP(+) + n H(+)(out). Its function is as follows. NDH shuttles electrons from NAD(P)H:plastoquinone, via FMN and iron-sulfur (Fe-S) centers, to quinones in the photosynthetic chain and possibly in a chloroplast respiratory chain. The immediate electron acceptor for the enzyme in this species is believed to be plastoquinone. Couples the redox reaction to proton translocation, and thus conserves the redox energy in a proton gradient. This is NAD(P)H-quinone oxidoreductase subunit H, chloroplastic from Coffea arabica (Arabian coffee).